Consider the following 246-residue polypeptide: UDP-N-acetyl-D-mannosaminuronic acid transferase (246 aa).

Belongs to the glycosyltransferase 26 family.

The enzyme catalyses UDP-N-acetyl-alpha-D-mannosaminouronate + N-acetyl-alpha-D-glucosaminyl-di-trans,octa-cis-undecaprenyl diphosphate = beta-D-ManNAcA-(1-&gt;4)-alpha-D-GlcNAc-di-trans,octa-cis-undecaprenyl diphosphate + UDP + H(+). It functions in the pathway bacterial outer membrane biogenesis; enterobacterial common antigen biosynthesis. In terms of biological role, catalyzes the synthesis of Und-PP-GlcNAc-ManNAcA (Lipid II), the second lipid-linked intermediate involved in enterobacterial common antigen (ECA) synthesis. The polypeptide is UDP-N-acetyl-D-mannosaminuronic acid transferase (Salmonella paratyphi A (strain ATCC 9150 / SARB42)).